Here is a 789-residue protein sequence, read N- to C-terminus: Disintegrin and metalloproteinase domain-containing protein 7 (789 aa).

Residues 1 to 25 form the signal peptide; the sequence is MFPTGIFLMSVLISQMQGRGIVGVE. The propeptide occupies 26–176; it reads GQELVHPKKL…NYSCEGLNFT (151 aa). N84, N167, and N174 each carry an N-linked (GlcNAc...) asparagine glycan. Over 177–668 the chain is Extracellular; sequence KKSTLIDAKI…WGEALNLTSV (492 aa). The Peptidase M12B domain maps to 199 to 393; that stretch reads KFIELFVVAD…QKPACILNNP (195 aa). Disulfide bonds link C310-C388, C350-C372, C352-C357, and C459-C479. The Disintegrin domain maps to 401 to 487; the sequence is YPFCGNKKVD…ECPKDESQAN (87 aa). Residues N583, N628, and N664 are each glycosylated (N-linked (GlcNAc...) asparagine). A helical transmembrane segment spans residues 669–689; sequence SIMVVVLVMVIIGVGLVILLI. Over 690 to 789 the chain is Cytoplasmic; it reads RYQKCIKMKQ…DSQSDCTRLG (100 aa). The span at 762 to 771 shows a compositional bias: basic and acidic residues; that stretch reads DPRGIADPKQ. Positions 762–789 are disordered; the sequence is DPRGIADPKQNDNMNLNLDSQSDCTRLG. The span at 772 to 789 shows a compositional bias: polar residues; that stretch reads NDNMNLNLDSQSDCTRLG.

Interacts with ITM2B in sperm; the interaction increases following capacitation. Interacts with HSPA5 and CANX. As to expression, expressed specifically in the caput region of the epididymis (at protein level).

The protein localises to the membrane. In terms of biological role, required for normal male fertility via maintenance of epithelial cell morphology in the caput epididymis and subsequently correct epididymis lumen structure required for sperm development. Plays a role in sperm motility, flagella morphology and tyrosine phosphorylation during sperm capacitance. Plays a role in normal expression levels of HSPA5, ITM2B and ADAM2 in sperm both prior to and post-capacitation. This is a non catalytic metalloprotease-like protein. In Rattus norvegicus (Rat), this protein is Disintegrin and metalloproteinase domain-containing protein 7.